The sequence spans 416 residues: Multifunctional CCA protein (416 aa).

Residues Gly-8 and Arg-11 each contribute to the ATP site. Residues Gly-8 and Arg-11 each coordinate CTP. Positions 21 and 23 each coordinate Mg(2+). Residues Arg-91, Arg-137, and Arg-140 each contribute to the ATP site. Residues Arg-91, Arg-137, and Arg-140 each coordinate CTP. One can recognise an HD domain in the interval 228-329 (TGVHTLMVLA…VKIFDKADFW (102 aa)).

This sequence belongs to the tRNA nucleotidyltransferase/poly(A) polymerase family. Bacterial CCA-adding enzyme type 1 subfamily. As to quaternary structure, monomer. Can also form homodimers and oligomers. Mg(2+) is required as a cofactor. Ni(2+) serves as cofactor.

It catalyses the reaction a tRNA precursor + 2 CTP + ATP = a tRNA with a 3' CCA end + 3 diphosphate. The enzyme catalyses a tRNA with a 3' CCA end + 2 CTP + ATP = a tRNA with a 3' CCACCA end + 3 diphosphate. In terms of biological role, catalyzes the addition and repair of the essential 3'-terminal CCA sequence in tRNAs without using a nucleic acid template. Adds these three nucleotides in the order of C, C, and A to the tRNA nucleotide-73, using CTP and ATP as substrates and producing inorganic pyrophosphate. tRNA 3'-terminal CCA addition is required both for tRNA processing and repair. Also involved in tRNA surveillance by mediating tandem CCA addition to generate a CCACCA at the 3' terminus of unstable tRNAs. While stable tRNAs receive only 3'-terminal CCA, unstable tRNAs are marked with CCACCA and rapidly degraded. In Shewanella baltica (strain OS155 / ATCC BAA-1091), this protein is Multifunctional CCA protein.